Here is a 95-residue protein sequence, read N- to C-terminus: Large ribosomal subunit protein bL25 (95 aa).

The protein belongs to the bacterial ribosomal protein bL25 family. Part of the 50S ribosomal subunit; part of the 5S rRNA/L5/L18/L25 subcomplex. Contacts the 5S rRNA. Binds to the 5S rRNA independently of L5 and L18.

Functionally, this is one of the proteins that binds to the 5S RNA in the ribosome where it forms part of the central protuberance. This chain is Large ribosomal subunit protein bL25, found in Shewanella sp. (strain ANA-3).